Reading from the N-terminus, the 504-residue chain is ATP synthase subunit alpha, chloroplastic (504 aa).

170–177 (GDRQTGKT) provides a ligand contact to ATP.

This sequence belongs to the ATPase alpha/beta chains family. In terms of assembly, F-type ATPases have 2 components, CF(1) - the catalytic core - and CF(0) - the membrane proton channel. CF(1) has five subunits: alpha(3), beta(3), gamma(1), delta(1), epsilon(1). CF(0) has four main subunits: a, b, b' and c.

It localises to the plastid. Its subcellular location is the chloroplast thylakoid membrane. The catalysed reaction is ATP + H2O + 4 H(+)(in) = ADP + phosphate + 5 H(+)(out). Its function is as follows. Produces ATP from ADP in the presence of a proton gradient across the membrane. The alpha chain is a regulatory subunit. The protein is ATP synthase subunit alpha, chloroplastic of Ostreococcus tauri.